The sequence spans 32 residues: Phospholipase A2 (32 aa).

Residues Tyr16, Gly18, and Gly20 each contribute to the Ca(2+) site.

Ca(2+) serves as cofactor. In terms of tissue distribution, expressed by the venom gland.

Its subcellular location is the secreted. The catalysed reaction is a 1,2-diacyl-sn-glycero-3-phosphocholine + H2O = a 1-acyl-sn-glycero-3-phosphocholine + a fatty acid + H(+). Functionally, PLA2 catalyzes the calcium-dependent hydrolysis of the 2-acyl groups in 3-sn-phosphoglycerides. The chain is Phospholipase A2 from Micrurus lemniscatus (South American coral snake).